We begin with the raw amino-acid sequence, 382 residues long: Dual-specificity RNA methyltransferase RlmN (382 aa).

The active-site Proton acceptor is Glu-95. The Radical SAM core domain maps to 101–348 (EDDRGTLCIS…TTVRKTRGDD (248 aa)). Residues Cys-108 and Cys-353 are joined by a disulfide bond. Cys-115, Cys-119, and Cys-122 together coordinate [4Fe-4S] cluster. Residues 179–180 (GE), Ser-211, 233–235 (SLH), and Asn-310 each bind S-adenosyl-L-methionine. Residue Cys-353 is the S-methylcysteine intermediate of the active site.

Belongs to the radical SAM superfamily. RlmN family. [4Fe-4S] cluster serves as cofactor.

It localises to the cytoplasm. It carries out the reaction adenosine(2503) in 23S rRNA + 2 reduced [2Fe-2S]-[ferredoxin] + 2 S-adenosyl-L-methionine = 2-methyladenosine(2503) in 23S rRNA + 5'-deoxyadenosine + L-methionine + 2 oxidized [2Fe-2S]-[ferredoxin] + S-adenosyl-L-homocysteine. It catalyses the reaction adenosine(37) in tRNA + 2 reduced [2Fe-2S]-[ferredoxin] + 2 S-adenosyl-L-methionine = 2-methyladenosine(37) in tRNA + 5'-deoxyadenosine + L-methionine + 2 oxidized [2Fe-2S]-[ferredoxin] + S-adenosyl-L-homocysteine. Functionally, specifically methylates position 2 of adenine 2503 in 23S rRNA and position 2 of adenine 37 in tRNAs. m2A2503 modification seems to play a crucial role in the proofreading step occurring at the peptidyl transferase center and thus would serve to optimize ribosomal fidelity. In Bordetella parapertussis (strain 12822 / ATCC BAA-587 / NCTC 13253), this protein is Dual-specificity RNA methyltransferase RlmN.